The sequence spans 595 residues: Proline--tRNA ligase (595 aa).

Residues methionine 1–glycine 22 form a disordered region.

Belongs to the class-II aminoacyl-tRNA synthetase family. ProS type 1 subfamily. Homodimer.

The protein resides in the cytoplasm. It catalyses the reaction tRNA(Pro) + L-proline + ATP = L-prolyl-tRNA(Pro) + AMP + diphosphate. Its function is as follows. Catalyzes the attachment of proline to tRNA(Pro) in a two-step reaction: proline is first activated by ATP to form Pro-AMP and then transferred to the acceptor end of tRNA(Pro). As ProRS can inadvertently accommodate and process non-cognate amino acids such as alanine and cysteine, to avoid such errors it has two additional distinct editing activities against alanine. One activity is designated as 'pretransfer' editing and involves the tRNA(Pro)-independent hydrolysis of activated Ala-AMP. The other activity is designated 'posttransfer' editing and involves deacylation of mischarged Ala-tRNA(Pro). The misacylated Cys-tRNA(Pro) is not edited by ProRS. In Salinispora tropica (strain ATCC BAA-916 / DSM 44818 / JCM 13857 / NBRC 105044 / CNB-440), this protein is Proline--tRNA ligase.